A 59-amino-acid polypeptide reads, in one-letter code: Photosystem II reaction center protein K (59 aa).

Positions 1–22 (MLNIFSLICLNSALYSSSFFFG) are excised as a propeptide. The helical transmembrane segment at 30 to 50 (FLSPIVDFMPVIPLFFFLLAF) threads the bilayer.

In terms of assembly, PSII is composed of 1 copy each of membrane proteins PsbA, PsbB, PsbC, PsbD, PsbE, PsbF, PsbH, PsbI, PsbJ, PsbK, PsbL, PsbM, PsbT, PsbX, PsbY, PsbZ, Psb30/Ycf12, at least 3 peripheral proteins of the oxygen-evolving complex and a large number of cofactors. It forms dimeric complexes. This protein, PsbL and plastoquinone-9 are found in PSII dimers but not seen in PSII monomers.

The protein localises to the plastid. It localises to the chloroplast thylakoid membrane. Functionally, one of the components of the core complex of photosystem II (PSII). PSII is a light-driven water:plastoquinone oxidoreductase that uses light energy to abstract electrons from H(2)O, generating O(2) and a proton gradient subsequently used for ATP formation. It consists of a core antenna complex that captures photons, and an electron transfer chain that converts photonic excitation into a charge separation. May be involved in PSII dimerization. One of the components of the core complex of photosystem II (PSII). PSII is a light-driven water:plastoquinone oxidoreductase that uses light energy to abstract electrons from H(2)O, generating O(2) and a proton gradient subsequently used for ATP formation. It consists of a core antenna complex that captures photons, and an electron transfer chain that converts photonic excitation into a charge separation. This chain is Photosystem II reaction center protein K, found in Spinacia oleracea (Spinach).